A 417-amino-acid polypeptide reads, in one-letter code: WAT1-related protein At3g02690, chloroplastic (417 aa).

The N-terminal 68 residues, 1–68, are a transit peptide targeting the chloroplast; that stretch reads MEWPWSAIAA…RRINGDSVVR (68 aa). Residues 67–92 are disordered; the sequence is VRRSTTSNNSTEETESSSSSSSVDCV. Positions 68-89 are enriched in low complexity; the sequence is RRSTTSNNSTEETESSSSSSSV. Helical transmembrane passes span 122 to 142, 152 to 172, 183 to 203, 213 to 233, 237 to 257, 269 to 289, 301 to 321, 339 to 359, 369 to 389, and 392 to 412; these read FLEWTVLISPFFFWGTAMVAM, FFVAAFRLIPAGLLLVAFAVY, AWFSIALFALVDATCFQGFLA, LGSVIIDSQPLTVAVLASFLF, IGIVRAGGLLLGVAGLLLLEV, LWGSGEWWMLLAAQSMAIGTV, IMATGWHMVIGGLPLLAISVI, VIALLYTSIFGSAVSYGVYFY, LSSLTFLTPMFASIFGYLYLN, and FSSLQLVGAAVTLVAIYLVNF. EamA domains lie at 133-255 and 283-411; these read FFWG…LLLL and SMAI…YLVN.

It belongs to the drug/metabolite transporter (DMT) superfamily. Plant drug/metabolite exporter (P-DME) (TC 2.A.7.4) family.

Its subcellular location is the plastid. The protein resides in the chloroplast membrane. This Arabidopsis thaliana (Mouse-ear cress) protein is WAT1-related protein At3g02690, chloroplastic.